A 44-amino-acid chain; its full sequence is Keratin-associated protein 20-3 (44 aa).

The protein belongs to the KRTAP type 20 family. Interacts with hair keratins.

Its function is as follows. In the hair cortex, hair keratin intermediate filaments are embedded in an interfilamentous matrix, consisting of hair keratin-associated proteins (KRTAP), which are essential for the formation of a rigid and resistant hair shaft through their extensive disulfide bond cross-linking with abundant cysteine residues of hair keratins. The matrix proteins include the high-sulfur and high-glycine-tyrosine keratins. The sequence is that of Keratin-associated protein 20-3 (KRTAP20-3) from Homo sapiens (Human).